A 23-amino-acid polypeptide reads, in one-letter code: Malate dehydrogenase (23 aa).

It belongs to the LDH/MDH superfamily. MDH type 2 family.

The enzyme catalyses (S)-malate + NAD(+) = oxaloacetate + NADH + H(+). Its function is as follows. Catalyzes the reversible oxidation of malate to oxaloacetate. The polypeptide is Malate dehydrogenase (mdh) (Thermoleophilum album).